The chain runs to 364 residues: Cobalt-precorrin-5B C(1)-methyltransferase (364 aa).

This sequence belongs to the CbiD family.

The catalysed reaction is Co-precorrin-5B + S-adenosyl-L-methionine = Co-precorrin-6A + S-adenosyl-L-homocysteine. The protein operates within cofactor biosynthesis; adenosylcobalamin biosynthesis; cob(II)yrinate a,c-diamide from sirohydrochlorin (anaerobic route): step 6/10. Its function is as follows. Catalyzes the methylation of C-1 in cobalt-precorrin-5B to form cobalt-precorrin-6A. This is Cobalt-precorrin-5B C(1)-methyltransferase from Pseudomonas entomophila (strain L48).